A 332-amino-acid polypeptide reads, in one-letter code: 5-dehydro-2-deoxygluconokinase (332 aa).

The protein belongs to the carbohydrate kinase PfkB family.

The enzyme catalyses 5-dehydro-2-deoxy-D-gluconate + ATP = 6-phospho-5-dehydro-2-deoxy-D-gluconate + ADP + H(+). It participates in polyol metabolism; myo-inositol degradation into acetyl-CoA; acetyl-CoA from myo-inositol: step 5/7. Functionally, catalyzes the phosphorylation of 5-dehydro-2-deoxy-D-gluconate (2-deoxy-5-keto-D-gluconate or DKG) to 6-phospho-5-dehydro-2-deoxy-D-gluconate (DKGP). The protein is 5-dehydro-2-deoxygluconokinase of Bacillus anthracis (strain A0248).